The primary structure comprises 563 residues: MNTFLIDYQQIQSPAKGFSKLFVDYASEGEARQELTSNFFHYDYRHEADYYKLLGSLSSKSFAREALRDLLLRQNREYGVAEEHLQLLEKIRSPRCMTIVTGQQPGLFTGPLYTIYKALSAVVIAERQKAMFPDYDFLPIFWIESDDHDFEESACTSLFRGSTRQEIILEPWNRLPGQMVSRSPIGPSIRQCLDTLVESLHESDYREDIITKLNEFYREETTLDGGFARTMAWLFRDYPLFFLSPGDPAFKKLSVEVFFRELSTCPEASHTVIAQSSRLEEKGYSAQAKPRTVNLFYINDHNQRQKIEQVDRDFFALSPGKQRYSRHQILEMCGDHPERFSPNVILRAIVQDHVLPVFAYIGGPGEISYLAQYRRTYEHFGLKMPFIIPRGSFTLIEPVVSRIMDKVMQKSGRPSLSRKHMYQTAFHDMAALQKNAIKGGDNHDYDALFDRTAEALARELLALRPALVQLDPTLEQSLMGTSKQAEKALDTLRQKTQRANRRKHDELLGQIDKSAMHLFPGGVPQERVVNIFYYLNKYGPGLIDELAMVLRAHSTESHIALEL.

Residues 474–506 adopt a coiled-coil conformation; it reads LEQSLMGTSKQAEKALDTLRQKTQRANRRKHDE.

Belongs to the BshC family.

In Prosthecochloris aestuarii (strain DSM 271 / SK 413), this protein is Putative cysteine ligase BshC.